The following is a 712-amino-acid chain: Golgin candidate 3 (712 aa).

The interval 23-49 (DEEEDDLHKYGSANGVSNSDRRNSSGF) is disordered. The segment covering 36–49 (NGVSNSDRRNSSGF) has biased composition (polar residues). Residues 65–134 (AHHEIERYKA…LKEARTDISR (70 aa)) adopt a coiled-coil conformation. Positions 135-150 (GSNNYAIKGNNDQSPN) are enriched in polar residues. Disordered regions lie at residues 135-176 (GSNN…TDSF) and 306-347 (ESRK…MEQS). 3 coiled-coil regions span residues 197-313 (QATE…LTNS), 340-558 (GKEE…LNRM), and 659-690 (LKDA…QEAA). Residues 328–344 (STLDKEKPESFPGKEEM) show a composition bias toward basic and acidic residues. Residues 557–608 (RMSMESDYLVDRRIVIKLLVTYFQKNHNKEVLDLMVRMLGFSEEDKERIGAA) form the GRIP domain. Positions 666 to 712 (ERREAEEAAASKAKQDSERTRQEAALHDSEFSTVPLRSSESNQRLSR) are disordered. Basic and acidic residues predominate over residues 678-695 (AKQDSERTRQEAALHDSE). The span at 696 to 712 (FSTVPLRSSESNQRLSR) shows a compositional bias: polar residues.

In terms of assembly, interacts with ARF1; preferentially with the active form of the protein.

It is found in the golgi apparatus. The protein localises to the endosome. Golgi matrix protein playing a role in tethering of vesicles to Golgi membranes and in maintaining the overall structure of the Golgi apparatus. In Arabidopsis thaliana (Mouse-ear cress), this protein is Golgin candidate 3 (GC3).